The chain runs to 365 residues: UDP-N-acetylglucosamine--N-acetylmuramyl-(pentapeptide) pyrophosphoryl-undecaprenol N-acetylglucosamine transferase (365 aa).

UDP-N-acetyl-alpha-D-glucosamine contacts are provided by residues 17–19 (TGG), Asn129, Arg167, Ser194, Ile250, 269–274 (ALTVSE), and Gln295.

Belongs to the glycosyltransferase 28 family. MurG subfamily.

The protein resides in the cell inner membrane. The catalysed reaction is di-trans,octa-cis-undecaprenyl diphospho-N-acetyl-alpha-D-muramoyl-L-alanyl-D-glutamyl-meso-2,6-diaminopimeloyl-D-alanyl-D-alanine + UDP-N-acetyl-alpha-D-glucosamine = di-trans,octa-cis-undecaprenyl diphospho-[N-acetyl-alpha-D-glucosaminyl-(1-&gt;4)]-N-acetyl-alpha-D-muramoyl-L-alanyl-D-glutamyl-meso-2,6-diaminopimeloyl-D-alanyl-D-alanine + UDP + H(+). It participates in cell wall biogenesis; peptidoglycan biosynthesis. Its function is as follows. Cell wall formation. Catalyzes the transfer of a GlcNAc subunit on undecaprenyl-pyrophosphoryl-MurNAc-pentapeptide (lipid intermediate I) to form undecaprenyl-pyrophosphoryl-MurNAc-(pentapeptide)GlcNAc (lipid intermediate II). In Shewanella woodyi (strain ATCC 51908 / MS32), this protein is UDP-N-acetylglucosamine--N-acetylmuramyl-(pentapeptide) pyrophosphoryl-undecaprenol N-acetylglucosamine transferase.